The chain runs to 538 residues: Methionine--tRNA ligase (538 aa).

Residues 21 to 31 (YYVNDAPHLGH) carry the 'HIGH' region motif. The Zn(2+) site is built by cysteine 137, cysteine 140, cysteine 162, and histidine 165. The 'KMSKS' region signature appears at 313–317 (KMSKS). Residue lysine 316 participates in ATP binding.

It belongs to the class-I aminoacyl-tRNA synthetase family. MetG type 2A subfamily. In terms of assembly, monomer. It depends on Zn(2+) as a cofactor.

The protein resides in the cytoplasm. It carries out the reaction tRNA(Met) + L-methionine + ATP = L-methionyl-tRNA(Met) + AMP + diphosphate. Is required not only for elongation of protein synthesis but also for the initiation of all mRNA translation through initiator tRNA(fMet) aminoacylation. The chain is Methionine--tRNA ligase from Streptomyces coelicolor (strain ATCC BAA-471 / A3(2) / M145).